Reading from the N-terminus, the 339-residue chain is Ferrochelatase (339 aa).

Fe cation-binding residues include histidine 202 and glutamate 283.

Belongs to the ferrochelatase family.

The protein resides in the cytoplasm. It catalyses the reaction heme b + 2 H(+) = protoporphyrin IX + Fe(2+). It functions in the pathway porphyrin-containing compound metabolism; protoheme biosynthesis; protoheme from protoporphyrin-IX: step 1/1. Functionally, catalyzes the ferrous insertion into protoporphyrin IX. The sequence is that of Ferrochelatase from Psychrobacter cryohalolentis (strain ATCC BAA-1226 / DSM 17306 / VKM B-2378 / K5).